Here is a 104-residue protein sequence, read N- to C-terminus: ATP-dependent Clp protease adapter protein ClpS (104 aa).

It belongs to the ClpS family. As to quaternary structure, binds to the N-terminal domain of the chaperone ClpA.

Its function is as follows. Involved in the modulation of the specificity of the ClpAP-mediated ATP-dependent protein degradation. The protein is ATP-dependent Clp protease adapter protein ClpS of Bordetella avium (strain 197N).